Reading from the N-terminus, the 658-residue chain is MERQFEIVSAYSPQGDQPVAIEKLVEGINSGKKKQVLLGATGTGKTFTISNVIKEVQKPTLVMAHNKTLAGQLYSELKDFFPNNAVEYFVSYYDYYQPEAYVPQTDTFIEKDAQINDEIDKLRHSATSALFERDDVIIVASVSCIYGLGSPEEYRELVVSLRVGMEKDRNQLLRELVDVQYGRNDIDFKRGTFRVRGDVVEIFPASLDEHCIRIEFFGDEIDRIREVNALTGEVLAEREHVAIFPASHFVTREEKMKVAIENIEKELEERLKELNENGKLLEAQRIEQRTRYDLEMMREMGFCSGIENYSRHLTLRPAGATPYTLLDYFPKDFLIVMDESHVSVPQVRAMYNGDQARKQVLVDHGFRLPSALDNRPLTFDEFEEKTNQVIYVSATPGPYELEQSPEVIEQIIRPTGLLDPPIDIRPIEGQIDDLLGEIQDRIAKNERVLITTLTKKMSEDLTDYLKDVGIKVTYLHSEIKTLERIEIIRDLRLGKFDVLVGINLLREGLDIPEVSLVAILDADKEGFLRSERSLIQTIGRAARNENGRVIMYADRITKSMGIAIEETKRRRSIQEAYNEEHGITPKTIQKGVRDVIRATTAAEEIETYEATPAKKMTKKEREKTIAKMEAEMKEAAKALDFERAAELRDLLLELKAEG.

The Helicase ATP-binding domain occupies 26–413 (EGINSGKKKQ…SPEVIEQIIR (388 aa)). Residue 39–46 (GATGTGKT) coordinates ATP. Residues 92 to 115 (YYDYYQPEAYVPQTDTFIEKDAQI) carry the Beta-hairpin motif. In terms of domain architecture, Helicase C-terminal spans 430–596 (QIDDLLGEIQ…TIQKGVRDVI (167 aa)). Positions 622–657 (EKTIAKMEAEMKEAAKALDFERAAELRDLLLELKAE) constitute a UVR domain.

It belongs to the UvrB family. Forms a heterotetramer with UvrA during the search for lesions. Interacts with UvrC in an incision complex.

The protein resides in the cytoplasm. Functionally, the UvrABC repair system catalyzes the recognition and processing of DNA lesions. A damage recognition complex composed of 2 UvrA and 2 UvrB subunits scans DNA for abnormalities. Upon binding of the UvrA(2)B(2) complex to a putative damaged site, the DNA wraps around one UvrB monomer. DNA wrap is dependent on ATP binding by UvrB and probably causes local melting of the DNA helix, facilitating insertion of UvrB beta-hairpin between the DNA strands. Then UvrB probes one DNA strand for the presence of a lesion. If a lesion is found the UvrA subunits dissociate and the UvrB-DNA preincision complex is formed. This complex is subsequently bound by UvrC and the second UvrB is released. If no lesion is found, the DNA wraps around the other UvrB subunit that will check the other stand for damage. This chain is UvrABC system protein B, found in Bacillus cereus (strain ATCC 14579 / DSM 31 / CCUG 7414 / JCM 2152 / NBRC 15305 / NCIMB 9373 / NCTC 2599 / NRRL B-3711).